Here is a 512-residue protein sequence, read N- to C-terminus: Dihydroniloticin synthase CYP71CD2 (512 aa).

A helical membrane pass occupies residues 1 to 21; sequence MNLQLDYFSITSFLVFLVVLF. Residue C449 coordinates heme.

It belongs to the cytochrome P450 family. Heme serves as cofactor.

It localises to the membrane. It catalyses the reaction tirucalla-7,24-dien-3beta-ol + 2 reduced [NADPH--hemoprotein reductase] + 2 O2 = dihydroniloticin + 2 oxidized [NADPH--hemoprotein reductase] + 2 H2O + 2 H(+). It participates in secondary metabolite biosynthesis; terpenoid biosynthesis. In terms of biological role, monooxygenase involved in the biosynthesis of limonoids triterpene natural products such as azadirachtin, an antifeedant widely used as bioinsecticide, and possessing many medicinal applications including anti-tumoral, anti-malarial, anti-rheumatic, antibacterial, anti-inflammatory, anti-pyretic and diuretic effects. Catalyzes the conversion of tirucalladienol to dihydroniloticin. This chain is Dihydroniloticin synthase CYP71CD2, found in Azadirachta indica (Neem tree).